The sequence spans 741 residues: Polyribonucleotide nucleotidyltransferase (741 aa).

2 residues coordinate Mg(2+): Asp-489 and Asp-495. The region spanning 556–615 is the KH domain; it reads PKIDSIQIPVDKIKVVIGKGGETIDKIIAETGVTIDIDEEGLVQIFSSDQDAIDRAKTII. Residues 625–693 enclose the S1 motif domain; it reads GEVYTVPVVR…EKGRVDASIK (69 aa). The interval 696 to 741 is disordered; it reads LPKPEKNEDGENGEEHRHCCCSHHKPDHHSESMEAPKKSDESETKE. Basic and acidic residues-rich tracts occupy residues 698 to 713 and 723 to 741; these read KPEK…EHRH and HHSE…ETKE.

This sequence belongs to the polyribonucleotide nucleotidyltransferase family. The cofactor is Mg(2+).

The protein resides in the cytoplasm. It carries out the reaction RNA(n+1) + phosphate = RNA(n) + a ribonucleoside 5'-diphosphate. Involved in mRNA degradation. Catalyzes the phosphorolysis of single-stranded polyribonucleotides processively in the 3'- to 5'-direction. The sequence is that of Polyribonucleotide nucleotidyltransferase from Streptococcus thermophilus (strain ATCC BAA-491 / LMD-9).